We begin with the raw amino-acid sequence, 143 residues long: Large ribosomal subunit protein uL13 (143 aa).

It belongs to the universal ribosomal protein uL13 family. Part of the 50S ribosomal subunit.

In terms of biological role, this protein is one of the early assembly proteins of the 50S ribosomal subunit, although it is not seen to bind rRNA by itself. It is important during the early stages of 50S assembly. The polypeptide is Large ribosomal subunit protein uL13 (Dichelobacter nodosus (strain VCS1703A)).